The primary structure comprises 291 residues: Acetylglutamate kinase (291 aa).

Substrate is bound by residues 65–66, Arg-87, and Asn-186; that span reads GG.

Belongs to the acetylglutamate kinase family. ArgB subfamily.

The protein localises to the cytoplasm. It catalyses the reaction N-acetyl-L-glutamate + ATP = N-acetyl-L-glutamyl 5-phosphate + ADP. The protein operates within amino-acid biosynthesis; L-arginine biosynthesis; N(2)-acetyl-L-ornithine from L-glutamate: step 2/4. In terms of biological role, catalyzes the ATP-dependent phosphorylation of N-acetyl-L-glutamate. In Mycolicibacterium vanbaalenii (strain DSM 7251 / JCM 13017 / BCRC 16820 / KCTC 9966 / NRRL B-24157 / PYR-1) (Mycobacterium vanbaalenii), this protein is Acetylglutamate kinase.